Reading from the N-terminus, the 226-residue chain is Imidazoleglycerol-phosphate dehydratase (226 aa).

Residues 23–55 (LTGGPIERPQPSLFASEKGANTAGPDDASQTTA) are disordered.

This sequence belongs to the imidazoleglycerol-phosphate dehydratase family.

It catalyses the reaction D-erythro-1-(imidazol-4-yl)glycerol 3-phosphate = 3-(imidazol-4-yl)-2-oxopropyl phosphate + H2O. Its pathway is amino-acid biosynthesis; L-histidine biosynthesis; L-histidine from 5-phospho-alpha-D-ribose 1-diphosphate: step 6/9. In Maudiozyma humilis (Sour dough yeast), this protein is Imidazoleglycerol-phosphate dehydratase (HIS3).